We begin with the raw amino-acid sequence, 125 residues long: uncharacterized protein (125 aa).

The region spanning 45 to 110 (IVPVGSKTLL…IGNVPLKILC (66 aa)) is the Cupin type-2 domain.

This is an uncharacterized protein from Methanocaldococcus jannaschii (strain ATCC 43067 / DSM 2661 / JAL-1 / JCM 10045 / NBRC 100440) (Methanococcus jannaschii).